The primary structure comprises 884 residues: DNA mismatch repair protein MutS (884 aa).

Position 601-608 (601-608 (GPNMSGKS)) interacts with ATP. The interval 826 to 845 (ESQLSFFGGEQSSKKQDKPL) is disordered.

The protein belongs to the DNA mismatch repair MutS family.

Functionally, this protein is involved in the repair of mismatches in DNA. It is possible that it carries out the mismatch recognition step. This protein has a weak ATPase activity. The protein is DNA mismatch repair protein MutS of Bacillus cereus (strain ATCC 14579 / DSM 31 / CCUG 7414 / JCM 2152 / NBRC 15305 / NCIMB 9373 / NCTC 2599 / NRRL B-3711).